We begin with the raw amino-acid sequence, 602 residues long: Potassium voltage-gated channel subfamily A member 5 (602 aa).

A disordered region spans residues 1–107 (MEISLVPMEN…EDQAPQDSGS (107 aa)). Positions 1-202 (MEISLVPMEN…FYQLGDEAME (202 aa)) are tetramerization domain. Residues 1 to 238 (MEISLVPMEN…LIFEYPESSG (238 aa)) lie on the Cytoplasmic side of the membrane. The segment covering 66-78 (PLPPMPQELPQPR) has biased composition (pro residues). The residue at position 81 (Ser81) is a Phosphoserine; by CK2 and PKA. A Glycyl lysine isopeptide (Lys-Gly) (interchain with G-Cter in SUMO) cross-link involves residue Lys212. A helical membrane pass occupies residues 239-260 (SARAIAIVSVLVILISIITFCL). The Extracellular portion of the chain corresponds to 261 to 314 (ETLPEFRDERELLRHPPVPPQPPAPAPGANGSGSGVLSSGPTVAPLLPRTLADP). The tract at residues 274 to 297 (RHPPVPPQPPAPAPGANGSGSGVL) is disordered. Residues 276-286 (PPVPPQPPAPA) are compositionally biased toward pro residues. N-linked (GlcNAc...) asparagine glycosylation occurs at Asn290. Residues 315–336 (FFIVETTCVIWFTFELLVRFFA) form a helical membrane-spanning segment. A lipid anchor (S-palmitoyl cysteine) is attached at Cys337. The Cytoplasmic segment spans residues 337–347 (CPSKAEFSRNI). The chain crosses the membrane as a helical span at residues 348–368 (MNIIDIVAIFPYFITLGTELA). Over 369–384 (EQQPGGGGQNGQQAMS) the chain is Extracellular. A helical; Voltage-sensor transmembrane segment spans residues 385–405 (LAILRVIRLVRVFRIFKLSRH). Residues 406-420 (SKGLQILGKTLQASM) lie on the Cytoplasmic side of the membrane. The interval 407–420 (KGLQILGKTLQASM) is S4-S5 linker. A helical membrane pass occupies residues 421–442 (RELGLLIFFLFIGVILFSSAVY). Over 443–456 (FAEADNQGSHFSSI) the chain is Extracellular. An intramembrane region (helical) is located at residues 457–468 (PDAFWWAVVTMT). The Selectivity filter motif lies at 469–474 (TVGYGD). The stretch at 469-476 (TVGYGDMR) is an intramembrane region. Residues 477 to 483 (PITVGGK) are Extracellular-facing. Residues 484-512 (IVGSLCAIAGVLTIALPVPVIVSNFNYFY) traverse the membrane as a helical segment. Residues 513–602 (HRETDHEEQA…CLDTSRETDL (90 aa)) are Cytoplasmic-facing. A Glycyl lysine isopeptide (Lys-Gly) (interchain with G-Cter in SUMO) cross-link involves residue Lys525. Residues Ser535, Ser546, and Ser569 each carry the phosphoserine; by PKA modification. Residues 600–602 (TDL) carry the PDZ-binding motif.

The protein belongs to the potassium channel family. A (Shaker) (TC 1.A.1.2) subfamily. Kv1.5/KCNA5 sub-subfamily. As to quaternary structure, homotetramer and heterotetramer of potassium channel proteins. Interacts with DLG1, which enhances channel currents. Forms a ternary complex with DLG1 and CAV3. Interacts with KCNAB1. Interacts with UBE2I. Interacts with XIRP2; the interaction is required for normal action potential configuration in the heart. Post-translationally, glycosylated. In terms of processing, sumoylated on Lys-212, and Lys-525, preferentially with SUMO3. Sumoylation regulates the voltage sensitivity of the channel. Expressed in the heart (at protein level). Expressed in the brain and weakly expressed in the thymus, skeletal muscle and spleen.

It localises to the cell membrane. The catalysed reaction is K(+)(in) = K(+)(out). Its function is as follows. Voltage-gated potassium channel that mediates transmembrane potassium transport in excitable membranes. Forms tetrameric potassium-selective channels through which potassium ions pass in accordance with their electrochemical gradient. The channel alternates between opened and closed conformations in response to the voltage difference across the membrane. Can form functional homotetrameric channels and heterotetrameric channels that contain variable proportions of KCNA1, KCNA2, KCNA4, KCNA5, and possibly other family members as well; channel properties depend on the type of alpha subunits that are part of the channel. Channel properties are modulated by cytoplasmic beta subunits that regulate the subcellular location of the alpha subunits and promote rapid inactivation. Homotetrameric channels display rapid activation and slow inactivation. Required for normal electrical conduction including formation of the infranodal ventricular conduction system and normal action potential configuration, as a result of its interaction with XIRP2. May play a role in regulating the secretion of insulin in normal pancreatic islets. Voltage-gated potassium channel that mediates transmembrane potassium transport in excitable membranes. Forms tetrameric potassium-selective channels through which potassium ions pass in accordance with their electrochemical gradient. The channel alternates between opened and closed conformations in response to the voltage difference across the membrane. Functionally, inactive. Inhibits expression of isoform 1 and isoform 2. The protein is Potassium voltage-gated channel subfamily A member 5 (Kcna5) of Mus musculus (Mouse).